The following is a 189-amino-acid chain: Fucolectin-5 (189 aa).

Residues 1–31 (MKTCNLTDRMKVKMIMLLFQILAISTLQSDS) form the signal peptide. The interval 40–189 (QENVAVRGKA…VEVNALLPAN (150 aa)) is F5/8 type C-like. 3 residues coordinate Ca(2+): aspartate 70, asparagine 72, and serine 81. 3 cysteine pairs are disulfide-bonded: cysteine 82-cysteine 178, cysteine 114-cysteine 115, and cysteine 140-cysteine 156. Positions 84 and 111 each coordinate alpha-L-fucose. The Cell attachment site signature appears at 111 to 113 (RGD). Residue arginine 118 coordinates alpha-L-fucose. 2 residues coordinate Ca(2+): cysteine 178 and glutamate 179.

Belongs to the fucolectin family. Homotrimer. In terms of tissue distribution, gill mucous cells.

Its subcellular location is the secreted. Acts as a defensive agent. Recognizes blood group fucosylated oligosaccharides including A, B, H and Lewis B-type antigens. Does not recognize Lewis A antigen and has low affinity for monovalent haptens. The chain is Fucolectin-5 from Anguilla japonica (Japanese eel).